Consider the following 360-residue polypeptide: Polyamine aminopropyltransferase 2 (360 aa).

Residues 68–299 form the PABS domain; that stretch reads DIWDEISLKE…TDWGFHIAAN (232 aa). Gln-94 contacts S-methyl-5'-thioadenosine. Residues His-123 and Asp-147 each contribute to the spermidine site. Residues Asp-167 and 201–202 contribute to the S-methyl-5'-thioadenosine site; that span reads DA. The Proton acceptor role is filled by Asp-219.

The protein belongs to the spermidine/spermine synthase family. In terms of assembly, homodimer or homotetramer.

Its subcellular location is the cytoplasm. It carries out the reaction S-adenosyl 3-(methylsulfanyl)propylamine + putrescine = S-methyl-5'-thioadenosine + spermidine + H(+). It functions in the pathway amine and polyamine biosynthesis; spermidine biosynthesis; spermidine from putrescine: step 1/1. Functionally, catalyzes the irreversible transfer of a propylamine group from the amino donor S-adenosylmethioninamine (decarboxy-AdoMet) to putrescine (1,4-diaminobutane) to yield spermidine. The sequence is that of Polyamine aminopropyltransferase 2 from Bacillus anthracis.